The sequence spans 225 residues: Myelin-associated neurite-outgrowth inhibitor (225 aa).

The Cytoplasmic segment spans residues 1–58 (MNPVYSPGSSGVPYANAKGIGYPAGFPMGYAAAAPAYSPNMYAGPNPAFQQELEHPAH). A helical membrane pass occupies residues 59-75 (VSSGVQMFMFGHAFSVA). The Extracellular segment spans residues 76–173 (RNGAIPSGYT…PAPIQSPRGN (98 aa)). The chain crosses the membrane as a helical span at residues 174-193 (GVAMGMVAGTTMAMSAGTLL). At 194-225 (TSHYPSPVAPQVTMPTYRPPGTPTYSYVPPQW) the chain is on the cytoplasmic side.

The protein belongs to the FAM168 family.

The protein localises to the cytoplasm. It is found in the perinuclear region. The protein resides in the cell membrane. It localises to the cell projection. Its subcellular location is the axon. Its function is as follows. Inhibitor of neuronal axonal outgrowth. In Xenopus laevis (African clawed frog), this protein is Myelin-associated neurite-outgrowth inhibitor (fam168b).